The sequence spans 159 residues: MTIVTEALTELEPVIKTTFTVEEIRQLLPHRYPFALVDRIIDYVPGQKAVGLKNVTINEPFFPGHIPNRPLMPGVLIVESMAQVGGVILTQLPGMKGKFFAFAGIDKTRFRRPVVPGDQLIMTVELLSFKMNKIAKMQGEARVDGQLAAQGEMMFSIFD.

H65 is a catalytic residue.

Belongs to the thioester dehydratase family. FabZ subfamily.

The protein resides in the cytoplasm. The enzyme catalyses a (3R)-hydroxyacyl-[ACP] = a (2E)-enoyl-[ACP] + H2O. Involved in unsaturated fatty acids biosynthesis. Catalyzes the dehydration of short chain beta-hydroxyacyl-ACPs and long chain saturated and unsaturated beta-hydroxyacyl-ACPs. The chain is 3-hydroxyacyl-[acyl-carrier-protein] dehydratase FabZ from Microcystis aeruginosa (strain NIES-843 / IAM M-2473).